Consider the following 96-residue polypeptide: Plasminogen-like protein B (96 aa).

A signal peptide spans 1–19 (MEHKEVVLLLLLFLKSGQG). A PAN domain is found at 20 to 96 (EPLDDYVNTQ…RMRDAVLFEK (77 aa)). 2 cysteine pairs are disulfide-bonded: C49–C73 and C53–C61.

The protein resides in the secreted. Its function is as follows. May bind noncovalently to lysine binding sites present in the kringle structures of plasminogen. This may interfere with the binding of fibrin or alpha-2-antiplasmin to plasminogen and may result in the localization of activity at sites necessary for extracellular matrix destruction. The protein is Plasminogen-like protein B (PLGLB1) of Homo sapiens (Human).